Consider the following 128-residue polypeptide: Aspartate 1-decarboxylase (128 aa).

The Schiff-base intermediate with substrate; via pyruvic acid role is filled by Ser25. Ser25 bears the Pyruvic acid (Ser) mark. Thr57 serves as a coordination point for substrate. Tyr58 serves as the catalytic Proton donor. 73–75 (GAA) provides a ligand contact to substrate.

It belongs to the PanD family. Heterooctamer of four alpha and four beta subunits. Pyruvate serves as cofactor. In terms of processing, is synthesized initially as an inactive proenzyme, which is activated by self-cleavage at a specific serine bond to produce a beta-subunit with a hydroxyl group at its C-terminus and an alpha-subunit with a pyruvoyl group at its N-terminus.

It is found in the cytoplasm. It catalyses the reaction L-aspartate + H(+) = beta-alanine + CO2. Its pathway is cofactor biosynthesis; (R)-pantothenate biosynthesis; beta-alanine from L-aspartate: step 1/1. Catalyzes the pyruvoyl-dependent decarboxylation of aspartate to produce beta-alanine. This chain is Aspartate 1-decarboxylase, found in Staphylococcus epidermidis (strain ATCC 35984 / DSM 28319 / BCRC 17069 / CCUG 31568 / BM 3577 / RP62A).